We begin with the raw amino-acid sequence, 696 residues long: Glycine--tRNA ligase beta subunit (696 aa).

Belongs to the class-II aminoacyl-tRNA synthetase family. As to quaternary structure, tetramer of two alpha and two beta subunits.

The protein localises to the cytoplasm. The enzyme catalyses tRNA(Gly) + glycine + ATP = glycyl-tRNA(Gly) + AMP + diphosphate. The sequence is that of Glycine--tRNA ligase beta subunit from Methylorubrum extorquens (strain CM4 / NCIMB 13688) (Methylobacterium extorquens).